The following is a 775-amino-acid chain: GRIP and coiled-coil domain-containing protein 1 (775 aa).

Residues 13 to 61 adopt a coiled-coil conformation; that stretch reads SKKDLLETIETQKKQLLQYQARLKDVVRAYKSLLKEKEALEASIKVLSV. The segment covering 84-93 has biased composition (basic and acidic residues); it reads DDRCSTHSED. 2 disordered regions span residues 84 to 153 and 614 to 639; these read DDRC…AGGE and GLPGRRSPVGGGGPGDPADTSSSDSL. 3 stretches are compositionally biased toward low complexity: residues 94-110, 133-147, and 629-638; these read STGTATSLDTAASLTST, ASWSESGVSSSSGDG, and DPADTSSSDS. Positions 153–763 form a coiled coil; it reads EVDKRLHQLK…PEEKQVIMRL (611 aa). Residues 713 to 763 enclose the GRIP domain; the sequence is QSREGANLEYLKNIIYRFLTLPDSLGRQQTLTAILTILHFSPEEKQVIMRL.

It localises to the cytoplasm. It is found in the golgi apparatus membrane. Its function is as follows. Probably involved in maintaining Golgi structure. This Homo sapiens (Human) protein is GRIP and coiled-coil domain-containing protein 1 (GCC1).